Here is a 112-residue protein sequence, read N- to C-terminus: Large ribosomal subunit protein eL30 (112 aa).

This sequence belongs to the eukaryotic ribosomal protein eL30 family.

The polypeptide is Large ribosomal subunit protein eL30 (RPL30) (Lupinus luteus (European yellow lupine)).